The following is a 168-amino-acid chain: CASP-like protein 4D1 (168 aa).

Topologically, residues 1-11 are cytoplasmic; that stretch reads MAPPPPSLASR. A helical transmembrane segment spans residues 12–32; that stretch reads MAALILRILTFIFLIASLVIL. Over 33 to 57 the chain is Extracellular; it reads TTNTATLELDLVEVKVHFKDVYAYR. The chain crosses the membrane as a helical span at residues 58–78; it reads YMLATIVIGLAYTVLQIAFTL. Topologically, residues 79–97 are cytoplasmic; that stretch reads YYVATGNRMMSGDGNLAFD. The chain crosses the membrane as a helical span at residues 98 to 118; that stretch reads FFGDKVISYILVTGAAAGFAS. The Extracellular segment spans residues 119–144; that stretch reads TKDIKPVFSGSGDFDAFINKGYASAS. Residues 145 to 165 form a helical membrane-spanning segment; that stretch reads LLLIGFVCTAVLSVFSSYALP. Residues 166–168 are Cytoplasmic-facing; it reads KQV.

It belongs to the Casparian strip membrane proteins (CASP) family. In terms of assembly, homodimer and heterodimers.

Its subcellular location is the cell membrane. The sequence is that of CASP-like protein 4D1 from Ricinus communis (Castor bean).